A 330-amino-acid chain; its full sequence is GTPase Obg (330 aa).

Positions 1–159 constitute an Obg domain; it reads MNFIDEVKIC…MWIHLSLKLL (159 aa). The region spanning 160 to 327 is the OBG-type G domain; it reads SDVGLVGLPN…IVKLALKTIK (168 aa). GTP-binding positions include 166–173, 191–195, 212–215, 279–282, and 308–310; these read GLPNAGKS, FTTLV, DIPG, NKCD, and STY. Mg(2+) contacts are provided by serine 173 and threonine 193.

This sequence belongs to the TRAFAC class OBG-HflX-like GTPase superfamily. OBG GTPase family. As to quaternary structure, monomer. Mg(2+) is required as a cofactor.

It localises to the cytoplasm. An essential GTPase which binds GTP, GDP and possibly (p)ppGpp with moderate affinity, with high nucleotide exchange rates and a fairly low GTP hydrolysis rate. Plays a role in control of the cell cycle, stress response, ribosome biogenesis and in those bacteria that undergo differentiation, in morphogenesis control. This is GTPase Obg from Rickettsia felis (strain ATCC VR-1525 / URRWXCal2) (Rickettsia azadi).